Consider the following 139-residue polypeptide: Endoribonuclease YbeY (139 aa).

Positions 105, 109, and 115 each coordinate Zn(2+).

It belongs to the endoribonuclease YbeY family. Requires Zn(2+) as cofactor.

The protein localises to the cytoplasm. Its function is as follows. Single strand-specific metallo-endoribonuclease involved in late-stage 70S ribosome quality control and in maturation of the 3' terminus of the 16S rRNA. The protein is Endoribonuclease YbeY of Flavobacterium johnsoniae (strain ATCC 17061 / DSM 2064 / JCM 8514 / BCRC 14874 / CCUG 350202 / NBRC 14942 / NCIMB 11054 / UW101) (Cytophaga johnsonae).